Here is a 221-residue protein sequence, read N- to C-terminus: Vesicle-associated membrane protein 714 (221 aa).

At alanine 2 the chain carries N-acetylalanine. The Cytoplasmic portion of the chain corresponds to 2-190 (AIVYAVVARG…RRALWMKNAK (189 aa)). The Longin domain occupies 7 to 112 (VVARGTVVLA…AMNDEFSRVL (106 aa)). The 61-residue stretch at 127-187 (TLNRVRGEVS…KRLRRALWMK (61 aa)) folds into the v-SNARE coiled-coil homology domain. A helical; Anchor for type IV membrane protein transmembrane segment spans residues 191 to 211 (LLVLLTCLIVFLLYIIIASFC). Topologically, residues 212–221 (GGITLPSCRS) are vesicular.

Belongs to the synaptobrevin family. As to expression, highly expressed in leaves, stems and roots. Detected in flowers.

The protein localises to the golgi apparatus membrane. In terms of biological role, involved in the targeting and/or fusion of transport vesicles to their target membrane. In Arabidopsis thaliana (Mouse-ear cress), this protein is Vesicle-associated membrane protein 714.